A 274-amino-acid chain; its full sequence is Shikimate dehydrogenase (NADP(+)) (274 aa).

Residues 14 to 16 and threonine 60 contribute to the shikimate site; that span reads SKS. Catalysis depends on lysine 64, which acts as the Proton acceptor. Glutamate 76 provides a ligand contact to NADP(+). Shikimate-binding residues include asparagine 85 and aspartate 101. NADP(+) contacts are provided by residues 126–130, 150–155, and methionine 214; these read GAGGA and NRTAEK. Tyrosine 216 serves as a coordination point for shikimate. Glycine 238 provides a ligand contact to NADP(+).

It belongs to the shikimate dehydrogenase family. Homodimer.

The catalysed reaction is shikimate + NADP(+) = 3-dehydroshikimate + NADPH + H(+). The protein operates within metabolic intermediate biosynthesis; chorismate biosynthesis; chorismate from D-erythrose 4-phosphate and phosphoenolpyruvate: step 4/7. In terms of biological role, involved in the biosynthesis of the chorismate, which leads to the biosynthesis of aromatic amino acids. Catalyzes the reversible NADPH linked reduction of 3-dehydroshikimate (DHSA) to yield shikimate (SA). The protein is Shikimate dehydrogenase (NADP(+)) of Pseudomonas paraeruginosa (strain DSM 24068 / PA7) (Pseudomonas aeruginosa (strain PA7)).